The chain runs to 115 residues: U3-lycotoxin-Ls1k (115 aa).

The signal sequence occupies residues 1–20 (MKFVLLFGVLLVTLFSYSSA). Positions 21–44 (EMLDDFDQADEDELLSLIEKEEAR) are excised as a propeptide. 4 cysteine pairs are disulfide-bonded: cysteine 48–cysteine 63, cysteine 55–cysteine 72, cysteine 62–cysteine 87, and cysteine 74–cysteine 85.

It belongs to the neurotoxin 19 (CSTX) family. 01 subfamily. As to expression, expressed by the venom gland.

The protein resides in the secreted. The chain is U3-lycotoxin-Ls1k from Lycosa singoriensis (Wolf spider).